A 143-amino-acid chain; its full sequence is 3-dehydroquinate dehydratase (143 aa).

The active-site Proton acceptor is Tyr-21. Asn-73, His-79, and Asp-86 together coordinate substrate. His-99 acts as the Proton donor in catalysis. Residues 100 to 101 (IS) and Arg-110 each bind substrate.

The protein belongs to the type-II 3-dehydroquinase family. As to quaternary structure, homododecamer.

It catalyses the reaction 3-dehydroquinate = 3-dehydroshikimate + H2O. It functions in the pathway metabolic intermediate biosynthesis; chorismate biosynthesis; chorismate from D-erythrose 4-phosphate and phosphoenolpyruvate: step 3/7. In terms of biological role, catalyzes a trans-dehydration via an enolate intermediate. This chain is 3-dehydroquinate dehydratase, found in Deinococcus radiodurans (strain ATCC 13939 / DSM 20539 / JCM 16871 / CCUG 27074 / LMG 4051 / NBRC 15346 / NCIMB 9279 / VKM B-1422 / R1).